The primary structure comprises 360 residues: Histidinol-phosphate aminotransferase (360 aa).

The residue at position 211 (Lys211) is an N6-(pyridoxal phosphate)lysine.

This sequence belongs to the class-II pyridoxal-phosphate-dependent aminotransferase family. Histidinol-phosphate aminotransferase subfamily. In terms of assembly, homodimer. Pyridoxal 5'-phosphate serves as cofactor.

The enzyme catalyses L-histidinol phosphate + 2-oxoglutarate = 3-(imidazol-4-yl)-2-oxopropyl phosphate + L-glutamate. It participates in amino-acid biosynthesis; L-histidine biosynthesis; L-histidine from 5-phospho-alpha-D-ribose 1-diphosphate: step 7/9. In Cronobacter sakazakii (strain ATCC BAA-894) (Enterobacter sakazakii), this protein is Histidinol-phosphate aminotransferase.